Here is a 180-residue protein sequence, read N- to C-terminus: MGNFHATTIFAVHHNGECAMAGDGQVTMGNAVVMKHTARKVRKLFQGKVLAGFAGSVADAFTLFEMFEGKLEEYNGNLQRAAVEMAKQWRGDKMLRQLEAMLIVMDKTTMLLVSGTGEVIEPDDGILAIGSGGNYALSAGRALKQYASEHLTAKQIAKASLNIAGDICVYTNHNIIVEEL.

T7 is an active-site residue. Na(+) contacts are provided by G165, C168, and T171.

Belongs to the peptidase T1B family. HslV subfamily. As to quaternary structure, a double ring-shaped homohexamer of HslV is capped on each side by a ring-shaped HslU homohexamer. The assembly of the HslU/HslV complex is dependent on binding of ATP.

Its subcellular location is the cytoplasm. It carries out the reaction ATP-dependent cleavage of peptide bonds with broad specificity.. Allosterically activated by HslU binding. Protease subunit of a proteasome-like degradation complex believed to be a general protein degrading machinery. The protein is ATP-dependent protease subunit HslV of Bacillus cereus (strain Q1).